A 1428-amino-acid polypeptide reads, in one-letter code: MAKKKSKASNSARGYATTSIPSRSASSPANKNQVKGEKNNKTQKVEPKNAFKVENQSNDIGVDTVDAFDHLLLDKTLPTIDAETEVIKNTSLSNSKSFLHSWQTDIRLRKNDNVLGLTEDEIQQILKTFRDSWKSSLKESYAFSNRSSFSLRKRYLWTTFLSLKGMGFEESEIFGAFSSIPIVSIDEYITWMITENLINSEPSNSSFSYEVQPSNYTTFCRMLDEPLPANNPVQSNSRLVPLMKDFSNDIKHTPNKETQPSNQVDDSLKSKDSKPLTMSEVLTQLPEDDIPFDDPFDLTSQYVKVKLKMLRLQIANKKNSEEFSTLNLQLESITSQYLFSSKEAEIVFRKSRIEFMNKLKALQQKLENERIVEEIKKNGIQEDSQSTDDSSKDDDNNSESNDMSPHNDAETRADDDAYLMGDLFNQEEEDIQDTENDLLNANYTLLPLTTDKSGTRPSTTLQYELHKIGSNIKAEFKTMPIGKIGYQSTCFVRCSTGQKTFSDLKTVLPTATLAADYISMIVLFRLMANFTKISLQTFPKSFKEVYGKFSAEKQNTDLAEDAKISEKLDSIIKSKELETPTSATTSKLMAPMDNIGKFSGFERPPETLLNKWRQQLESESAEKFKVFRNQLPATMFRETIIDAVNNSQLLIISGDTGCGKSTQIPAFLLENSTKNGKAVKIYVTEPRRISAISLANRVSQELGGNPPSARSHELVGYSVRLDSKCTPLTPLTYVTTGTFLRLLEVGNEIESVTHLIIDEVHERSIDSDLLLIHVLHLLKQHPHLKIIIMSATLNAEKFQLYFEGSNLITIPGKTYPVHRFYLEDILSQFGNDKSFGNAAGQDVIEEDDYETDQQDASISNKSAEDAIVEMNLIPAWYNEKAINYGLIVYLLKYIFTEGDPKFSKCVLVFLPGISEILRVKSLIEDMPMFRNHRKFCIYMLHSTLSSAQQQSVFNIPPKGCRKIVLSTNIAETGVTIPDVTCVIDTGVHREMRYNSRRHLSRLTDTFVSKANAKQRSGRAGRVQEGICYHLFSKFKHDTQFLSYQTPEILRLNLQEVVLRVKMCQMGDVQDVLGKALDPPSSTNIIRALEKLHQVGALSENEKLTKLGKFLSQLPVDANLGKILVLGCFYKCVDAASSIVAMLTIGSPFRKSVDNEFSANKARLSFAKENTRSDLVLMYYAYCAWREICLSPLGPDEDSFAKEKYLNLEALSMTESLKIQLLSELKDMKLLGASDVDTCKSLKRSICRRFAVIPKEHDINSGNAEILCGVIAASLYPNILRYDYEKRQWSTLSTNKRVRILDVSVNNRSELPNMPSKFVAYTNMMSSTRASEYVNETTMVTLRQLLMMCGLKVENRVSVGQAKLDNFTVYFENVYVSASLSILRRFIETSLNEFFAEPDKRLLNSHLEVIVNIVSRLNYGTKFQKRLKD.

Disordered regions lie at residues 1-53, 249-274, and 377-413; these read MAKK…AFKV, DIKH…KDSK, and KNGI…ETRA. The span at 16 to 33 shows a compositional bias: polar residues; sequence ATTSIPSRSASSPANKNQ. Over residues 34–51 the composition is skewed to basic and acidic residues; the sequence is VKGEKNNKTQKVEPKNAF. The segment covering 256–265 has biased composition (polar residues); it reads KETQPSNQVD. Residues 641–811 enclose the Helicase ATP-binding domain; sequence IDAVNNSQLL…FEGSNLITIP (171 aa). 654 to 661 contributes to the ATP binding site; that stretch reads GDTGCGKS. A DEAH box motif is present at residues 758–761; the sequence is DEVH. A Helicase C-terminal domain is found at 886 to 1064; sequence LIVYLLKYIF…EVVLRVKMCQ (179 aa).

It belongs to the helicase family. SKI2 subfamily.

Its subcellular location is the cytoplasm. This is an uncharacterized protein from Schizosaccharomyces pombe (strain 972 / ATCC 24843) (Fission yeast).